The chain runs to 84 residues: Large ribosomal subunit protein bL31B (84 aa).

Belongs to the bacterial ribosomal protein bL31 family. Type B subfamily. Part of the 50S ribosomal subunit.

In Phocaeicola vulgatus (strain ATCC 8482 / DSM 1447 / JCM 5826 / CCUG 4940 / NBRC 14291 / NCTC 11154) (Bacteroides vulgatus), this protein is Large ribosomal subunit protein bL31B.